The sequence spans 505 residues: L-carnitine/gamma-butyrobetaine antiporter (505 aa).

12 consecutive transmembrane segments (helical) span residues 10 to 30 (IEPKVFFPPLIIVGILCWLTV), 50 to 70 (IWGWAFEWYMVVMLFGWFWLV), 92 to 112 (IFMMFASCTSAAVLFWGSIEI), 143 to 163 (GPLPWATYSFLSVAFAYFFFV), 195 to 215 (FYLVALIFAMGTSLGLATPLV), 231 to 251 (LDAIIITCWIVLNAICVACGL), 263 to 283 (SYLSFLMLGWVFIVSGASFIM), 316 to 336 (WTVFYWAWWVIYAIQMSIFLA), 347 to 367 (LCFGMVLGLTASTWILWTVLG), 403 to 423 (FSTATMWGFFILCFIATVTLI), 446 to 466 (LLVRIGWSVLVGVIGIVLLAL), and 475 to 495 (AIIAGGCPLFFVNIMVTLSFI).

The protein belongs to the BCCT transporter (TC 2.A.15) family. CaiT subfamily. As to quaternary structure, homotrimer.

The protein resides in the cell inner membrane. The catalysed reaction is 4-(trimethylamino)butanoate(in) + (R)-carnitine(out) = 4-(trimethylamino)butanoate(out) + (R)-carnitine(in). The protein operates within amine and polyamine metabolism; carnitine metabolism. Its function is as follows. Catalyzes the exchange of L-carnitine for gamma-butyrobetaine. In Citrobacter koseri (strain ATCC BAA-895 / CDC 4225-83 / SGSC4696), this protein is L-carnitine/gamma-butyrobetaine antiporter.